A 63-amino-acid polypeptide reads, in one-letter code: Large ribosomal subunit protein uL29 (63 aa).

The protein belongs to the universal ribosomal protein uL29 family.

This chain is Large ribosomal subunit protein uL29, found in Baumannia cicadellinicola subsp. Homalodisca coagulata.